Here is a 570-residue protein sequence, read N- to C-terminus: Glutamate--tRNA ligase (570 aa).

The 'HIGH' region motif lies at 107–117 (PNPDFVLHLGS).

The protein belongs to the class-I aminoacyl-tRNA synthetase family. Glutamate--tRNA ligase type 2 subfamily.

The protein localises to the cytoplasm. The catalysed reaction is tRNA(Glu) + L-glutamate + ATP = L-glutamyl-tRNA(Glu) + AMP + diphosphate. Catalyzes the attachment of glutamate to tRNA(Glu) in a two-step reaction: glutamate is first activated by ATP to form Glu-AMP and then transferred to the acceptor end of tRNA(Glu). This chain is Glutamate--tRNA ligase, found in Pyrobaculum calidifontis (strain DSM 21063 / JCM 11548 / VA1).